The sequence spans 935 residues: Lon protease homolog 2, peroxisomal (935 aa).

In terms of domain architecture, Lon N-terminal spans 12 to 296 (LPVHRLERNL…NLRRLVEEMG (285 aa)). ATP is bound at residue 452–459 (GPPGVGKT). Positions 692-922 (QKGYGVVNGL…SDVLASVWEG (231 aa)) constitute a Lon proteolytic domain. Active-site residues include serine 789 and lysine 832. Positions 933–935 (ARI) match the Microbody targeting signal motif.

This sequence belongs to the peptidase S16 family.

It localises to the peroxisome matrix. It catalyses the reaction Hydrolysis of proteins in presence of ATP.. In terms of biological role, ATP-dependent serine protease that mediates the selective degradation of misfolded and unassembled polypeptides in the peroxisomal matrix. Necessary for type 2 peroxisome targeting signal (PTS2)-containing protein processing and facilitates peroxisome matrix protein import. The sequence is that of Lon protease homolog 2, peroxisomal (PLN) from Pichia angusta (Yeast).